Here is a 492-residue protein sequence, read N- to C-terminus: PHO85 cyclin-8 (492 aa).

3 disordered regions span residues 1–32, 143–163, and 223–252; these read MAND…DNDS, SGSG…GTGR, and KVNS…ENES. Positions 8-20 are enriched in polar residues; sequence NKSLINDALTRSM. Residues 23 to 32 show a composition bias toward acidic residues; sequence FYDDDDDNDS. Phosphoserine is present on Ser32.

It belongs to the cyclin family. PHO80 subfamily. As to quaternary structure, forms a cyclin-CDK complex with PHO85.

It is found in the cytoplasm. The protein resides in the nucleus. In terms of biological role, cyclin partner of the cyclin-dependent kinase (CDK) PHO85. Together with cyclin PCL10, negatively controls glycogen accumulation under favorable growth conditions. Involved in phosphorylation and negative regulation of glycogen synthase GSY2. Also has minor GLC8 kinase activity. This chain is PHO85 cyclin-8 (PCL8), found in Saccharomyces cerevisiae (strain ATCC 204508 / S288c) (Baker's yeast).